Reading from the N-terminus, the 166-residue chain is Large ribosomal subunit protein mL49 (166 aa).

The interval 54–77 is disordered; the sequence is PTKIPEPPKHKHYPTPSGWQPPRD.

The protein belongs to the mitochondrion-specific ribosomal protein mL49 family. Component of the mitochondrial ribosome large subunit (39S) which comprises a 16S rRNA and about 50 distinct proteins. Interacts with OXA1L.

It localises to the mitochondrion. This is Large ribosomal subunit protein mL49 (Mrpl49) from Mus musculus (Mouse).